The primary structure comprises 116 residues: Small ribosomal subunit protein bS16 (116 aa).

Belongs to the bacterial ribosomal protein bS16 family.

The polypeptide is Small ribosomal subunit protein bS16 (Chlamydia trachomatis serovar L2 (strain ATCC VR-902B / DSM 19102 / 434/Bu)).